A 500-amino-acid polypeptide reads, in one-letter code: NAD(P)H-quinone oxidoreductase subunit 2, chloroplastic (500 aa).

13 consecutive transmembrane segments (helical) span residues 15–35 (ILPESILIFCLLTTLIIDLSL), 42–62 (WIIYLNTIGLILSGLFLCLQW), 79–99 (FSIAFRFCIIIASLLSLLLSI), 109–129 (LMEFVIFLLGATIGGMFLCGA), 132–152 (LITIFTSLECLGLSSYLLAGY), 167–187 (LLVGGASSAILAYGFSWLYGL), 201–221 (LIFADFVNPLIKWITLTCIIV), 247–267 (VVAFLSVASKTAGLALTIRII), 278–298 (WQFLLQILACLTMIVGNLVAI), 306–326 (MLAYSSISQAGYLMIGIISST), 334–354 (LVYMLIYIFMNLGAFGCVILF), 377–397 (ASCLTIFLLSLGGIPPFAGFF), and 400–420 (IYLFWSGWQAGLYILTFVGLL).

The protein belongs to the complex I subunit 2 family. NDH is composed of at least 16 different subunits, 5 of which are encoded in the nucleus.

The protein resides in the plastid. Its subcellular location is the chloroplast thylakoid membrane. The catalysed reaction is a plastoquinone + NADH + (n+1) H(+)(in) = a plastoquinol + NAD(+) + n H(+)(out). It carries out the reaction a plastoquinone + NADPH + (n+1) H(+)(in) = a plastoquinol + NADP(+) + n H(+)(out). Its function is as follows. NDH shuttles electrons from NAD(P)H:plastoquinone, via FMN and iron-sulfur (Fe-S) centers, to quinones in the photosynthetic chain and possibly in a chloroplast respiratory chain. The immediate electron acceptor for the enzyme in this species is believed to be plastoquinone. Couples the redox reaction to proton translocation, and thus conserves the redox energy in a proton gradient. The chain is NAD(P)H-quinone oxidoreductase subunit 2, chloroplastic from Chaetosphaeridium globosum (Charophycean green alga).